Consider the following 384-residue polypeptide: Galactokinase (384 aa).

Substrate is bound at residue 34 to 37 (EHTD). ATP is bound at residue 123 to 129 (SSGLSSS). Mg(2+) is bound by residues Ser-129 and Glu-161. Asp-173 serves as the catalytic Proton acceptor. Substrate is bound at residue Tyr-222.

The protein belongs to the GHMP kinase family. GalK subfamily.

Its subcellular location is the cytoplasm. It carries out the reaction alpha-D-galactose + ATP = alpha-D-galactose 1-phosphate + ADP + H(+). Its pathway is carbohydrate metabolism; galactose metabolism. Its function is as follows. Catalyzes the transfer of the gamma-phosphate of ATP to D-galactose to form alpha-D-galactose-1-phosphate (Gal-1-P). The polypeptide is Galactokinase (Actinobacillus pleuropneumoniae serotype 3 (strain JL03)).